Reading from the N-terminus, the 327-residue chain is Aliphatic sulfonates import ATP-binding protein SsuB (327 aa).

The tract at residues 21–54 is disordered; it reads ELAQPRIADGDAQDAAVYERDGGAHAPPDGDRAD. Basic and acidic residues predominate over residues 37–54; sequence VYERDGGAHAPPDGDRAD. The ABC transporter domain occupies 66–285; the sequence is VRLTRVSKRY…ARASAAFAAL (220 aa). Residue 98–105 coordinates ATP; sequence GRSGCGKS. Positions 300 to 327 are disordered; it reads APAAPNAAGPEGASRGRAAPASGLRWAV.

It belongs to the ABC transporter superfamily. Aliphatic sulfonates importer (TC 3.A.1.17.2) family. The complex is composed of two ATP-binding proteins (SsuB), two transmembrane proteins (SsuC) and a solute-binding protein (SsuA).

The protein resides in the cell inner membrane. The enzyme catalyses ATP + H2O + aliphatic sulfonate-[sulfonate-binding protein]Side 1 = ADP + phosphate + aliphatic sulfonateSide 2 + [sulfonate-binding protein]Side 1.. Part of the ABC transporter complex SsuABC involved in aliphatic sulfonates import. Responsible for energy coupling to the transport system. The protein is Aliphatic sulfonates import ATP-binding protein SsuB of Burkholderia pseudomallei (strain K96243).